The sequence spans 278 residues: Deoxyuridine 5'-triphosphate nucleotidohydrolase (278 aa).

Residues Arg171 to Gly173 and Phe273 to Gly274 each bind substrate.

The protein belongs to the dUTPase family. Mg(2+) is required as a cofactor.

It catalyses the reaction dUTP + H2O = dUMP + diphosphate + H(+). In terms of biological role, involved in nucleotide metabolism: produces dUMP, the immediate precursor of thymidine nucleotides and decreases the intracellular concentration of dUTP to avoid uracil incorporation into viral DNA. The polypeptide is Deoxyuridine 5'-triphosphate nucleotidohydrolase (Homo sapiens (Human)).